We begin with the raw amino-acid sequence, 600 residues long: Elongation factor 4 (600 aa).

The tr-type G domain occupies 5 to 187 (SRIRNFSIIA…AIVTRLPPPK (183 aa)). Residues 17–22 (DHGKST) and 134–137 (NKID) each bind GTP.

It belongs to the TRAFAC class translation factor GTPase superfamily. Classic translation factor GTPase family. LepA subfamily.

The protein localises to the cell inner membrane. The enzyme catalyses GTP + H2O = GDP + phosphate + H(+). Functionally, required for accurate and efficient protein synthesis under certain stress conditions. May act as a fidelity factor of the translation reaction, by catalyzing a one-codon backward translocation of tRNAs on improperly translocated ribosomes. Back-translocation proceeds from a post-translocation (POST) complex to a pre-translocation (PRE) complex, thus giving elongation factor G a second chance to translocate the tRNAs correctly. Binds to ribosomes in a GTP-dependent manner. This is Elongation factor 4 from Rhodospirillum centenum (strain ATCC 51521 / SW).